A 1173-amino-acid chain; its full sequence is 3-hydroxy-3-methylglutaryl coenzyme A reductase mlcD (1173 aa).

N143 and N186 each carry an N-linked (GlcNAc...) asparagine glycan. Positions 241–420 (DVVVMVLGYI…FTFYTAILSI (180 aa)) constitute an SSD domain. Transmembrane regions (helical) follow at residues 242 to 262 (VVVM…LFLS), 272 to 292 (LATS…DVAI), 302 to 322 (LLSE…SITL), 368 to 388 (NIVC…VLGI), 397 to 417 (VLAA…YTAI), 479 to 499 (FWMV…TLFQ), and 594 to 614 (VLSK…SYLF). A linker region spans residues 498–673 (FQASSSGSLS…FTPTTTDSDS (176 aa)). Positions 647 to 666 (NQTPQIQSSLQAPQTRVFTP) are enriched in polar residues. The tract at residues 647-669 (NQTPQIQSSLQAPQTRVFTPTTT) is disordered. The tract at residues 674 to 1133 (DASLVLIKAS…LVKAHMAHNR (460 aa)) is catalytic. E822 serves as the catalytic Charge relay system. N886 is a glycosylation site (N-linked (GlcNAc...) asparagine). The active-site Charge relay system is K956. N997 carries an N-linked (GlcNAc...) asparagine glycan. The active-site Charge relay system is D1032. H1128 serves as the catalytic Proton donor. An N-linked (GlcNAc...) asparagine glycan is attached at N1132. The interval 1132 to 1173 (NRSAPASSAPSRSVSPSGGTRTVPVPNNALRPSAAATDRARR) is disordered. Positions 1133–1148 (RSAPASSAPSRSVSPS) are enriched in low complexity.

It belongs to the HMG-CoA reductase family.

The protein localises to the endoplasmic reticulum membrane. It carries out the reaction (R)-mevalonate + 2 NADP(+) + CoA = (3S)-3-hydroxy-3-methylglutaryl-CoA + 2 NADPH + 2 H(+). Its pathway is polyketide biosynthesis. Its function is as follows. HMG-CoA reductase; part of the gene cluster that mediates the biosynthesis of compactin, also known as mevastatin or ML-236B, and which acts as a potent competitive inhibitor of HMG-CoA reductase. Compactin biosynthesis is performed in two stages. The first stage is catalyzed by the nonaketide synthase mlcA, which belongs to type I polyketide synthases and catalyzes the iterative nine-step formation of the polyketide. This PKS stage is completed by the action of dehydrogenase mlcG, which catalyzes the NADPH-dependent reduction of the unsaturated tetra-, penta- and heptaketide intermediates that arise during the mlcA-mediated biosynthesis of the nonaketide chain and leads to dihydro-ML-236C carboxylate. Covalently bound dihydro-ML-236C carboxylate is released from mlcA by the mlcF esterase. Conversion of dihydro-ML-236C carboxylate into ML-236A carboxylate is subsequently performed with the participation of molecular oxygen and P450 monoogygenase mlcC. Finally, mlcH performs the conversion of ML-236A carboxylate to ML-236B/compactin carboxylate through the addition of the side-chain diketide moiety produced by the diketide synthase mlcB. HMG-CoA reductase mlcD may act as a down-regulator of compactin production and is involved in conferring resistance to ML-236B/compactin. The sequence is that of 3-hydroxy-3-methylglutaryl coenzyme A reductase mlcD from Penicillium citrinum.